The sequence spans 356 residues: Phenylalanine--tRNA ligase alpha subunit (356 aa).

E260 provides a ligand contact to Mg(2+).

The protein belongs to the class-II aminoacyl-tRNA synthetase family. Phe-tRNA synthetase alpha subunit type 1 subfamily. In terms of assembly, tetramer of two alpha and two beta subunits. It depends on Mg(2+) as a cofactor.

Its subcellular location is the cytoplasm. The enzyme catalyses tRNA(Phe) + L-phenylalanine + ATP = L-phenylalanyl-tRNA(Phe) + AMP + diphosphate + H(+). The protein is Phenylalanine--tRNA ligase alpha subunit of Gluconacetobacter diazotrophicus (strain ATCC 49037 / DSM 5601 / CCUG 37298 / CIP 103539 / LMG 7603 / PAl5).